Here is a 574-residue protein sequence, read N- to C-terminus: uncharacterized protein (574 aa).

This is an uncharacterized protein from Homo sapiens (Human).